The sequence spans 361 residues: Peptide chain release factor 1 (361 aa).

An N5-methylglutamine modification is found at Q237. Residues 287-306 (KRAAEEASTRKSLVGSGDRS) are disordered.

Belongs to the prokaryotic/mitochondrial release factor family. In terms of processing, methylated by PrmC. Methylation increases the termination efficiency of RF1.

Its subcellular location is the cytoplasm. Peptide chain release factor 1 directs the termination of translation in response to the peptide chain termination codons UAG and UAA. The sequence is that of Peptide chain release factor 1 from Alteromonas mediterranea (strain DSM 17117 / CIP 110805 / LMG 28347 / Deep ecotype).